A 732-amino-acid polypeptide reads, in one-letter code: Protein FAR1-RELATED SEQUENCE 4 (732 aa).

An FAR1 domain is found at Leu11–Pro97. The MULE domain occupies Val212 to Pro308. The SWIM-type zinc-finger motif lies at Tyr490–Gly526. The tract at residues Gln623–Gly683 is disordered. Positions Glu624–Ile635 are enriched in polar residues.

It belongs to the FHY3/FAR1 family. As to expression, expressed in hypocotyls, rosette and cauline leaves, inflorescences stems, flowers and siliques.

The protein resides in the nucleus. Putative transcription activator involved in regulating light control of development. In Arabidopsis thaliana (Mouse-ear cress), this protein is Protein FAR1-RELATED SEQUENCE 4 (FRS4).